The chain runs to 262 residues: MSIMRRILCLAVVIFIINDVSSQGLGNNKNWKKNGMSLSSPGNKKPTGNNAVPQKSKMNNMNQNSLSQPKRSSPPGNSMYNMANQGPMGMMGGFGMGMNNKQMREFMIARRTHGVSPFLKKKICHMAKVAPPVNGQMPSPPQLYAQGFKIRRIGKWFSQDLDWSEGVAMCHNKEMEHRGCEKTPSSKWGRMFPGMGGMGGMGGMGGMMMGNRPMASCDVTKPNSCGNPALMKCSKYHKDRFGMPVCCATSEMTANQLENMGF.

Positions 1–22 (MSIMRRILCLAVVIFIINDVSS) are cleaved as a signal peptide. Over residues 26–35 (GNNKNWKKNG) the composition is skewed to low complexity. Residues 26 to 84 (GNNKNWKKNGMSLSSPGNKKPTGNNAVPQKSKMNNMNQNSLSQPKRSSPPGNSMYNMAN) form a disordered region. The span at 36 to 84 (MSLSSPGNKKPTGNNAVPQKSKMNNMNQNSLSQPKRSSPPGNSMYNMAN) shows a compositional bias: polar residues.

As to expression, expressed in mantle and, after secretion, incorporated into acid-insoluble nacre matrix of the shell (at protein level). Expressed primarily in the mantle with highest level in the mantle pallium and lower level in the mantle edge.

Its subcellular location is the secreted. This Pinctada maxima (Silver-lipped pearl oyster) protein is Methionine-rich nacre protein.